The chain runs to 143 residues: Large ribosomal subunit protein uL13 (143 aa).

The protein belongs to the universal ribosomal protein uL13 family. In terms of assembly, part of the 50S ribosomal subunit.

Functionally, this protein is one of the early assembly proteins of the 50S ribosomal subunit, although it is not seen to bind rRNA by itself. It is important during the early stages of 50S assembly. This Rubrobacter xylanophilus (strain DSM 9941 / JCM 11954 / NBRC 16129 / PRD-1) protein is Large ribosomal subunit protein uL13.